We begin with the raw amino-acid sequence, 255 residues long: MPYLYRIAYDGTLFYGFTGHSRSLEPALKRVFGEILGRGSRTDPGVSAVANTVMVSQKLPIALVNSKLPRGVWAWAIAEVPQSFNPRRAKFRHYLYVAPHWGEDLGSMHEAAEVLAGTHDFASFIQRRGEKISTIATVMEIKVELRGDLIYMHFVGRGFKNKMIRKLAWAILAAGRGIFNIRDIRELLERPRPGVVPSAPAEGLVLLNIEYDVDFQIDYTALRSAYVYFLSKYRHAVAHAAALKAVGETLATWEQ.

Residue Asp-43 is the Nucleophile of the active site. Substrate is bound at residue Tyr-94.

The protein belongs to the tRNA pseudouridine synthase TruA family.

The enzyme catalyses uridine(38/39/40) in tRNA = pseudouridine(38/39/40) in tRNA. In terms of biological role, formation of pseudouridine at positions 38, 39 and 40 in the anticodon stem and loop of transfer RNAs. The protein is tRNA pseudouridine synthase A of Pyrobaculum islandicum (strain DSM 4184 / JCM 9189 / GEO3).